We begin with the raw amino-acid sequence, 339 residues long: Prepilin peptidase EppA (339 aa).

The next 10 membrane-spanning stretches (helical) occupy residues 3 to 23, 27 to 47, 48 to 68, 75 to 95, 99 to 119, 125 to 145, 146 to 166, 180 to 200, 204 to 224, and 319 to 339; these read LLNV…ITDI, IIPH…GYYY, FGFN…ILSI, VKLF…VFYI, ILYL…YKIL, DIIP…YFIN, IYEI…SIFV, LGYL…TYFI, VLLT…VIYA, and FVPF…LAII.

It belongs to the peptidase A24 family.

The protein localises to the cell membrane. Functionally, peptidase that processes the N-terminus of prepilins. The polypeptide is Prepilin peptidase EppA (Methanocaldococcus jannaschii (strain ATCC 43067 / DSM 2661 / JAL-1 / JCM 10045 / NBRC 100440) (Methanococcus jannaschii)).